The sequence spans 582 residues: Inactive metallocarboxypeptidase ECM14 (582 aa).

Positions 1–20 are cleaved as a signal peptide; sequence MHILQVITGATLVSVPFVSA. The propeptide occupies 21–172; the sequence is IPSSTSEFLP…QAVYESYPQP (152 aa). A Peptidase M14 domain is found at 200–522; it reads DYQPLSVIIP…NAVLVFGQFL (323 aa). Residues H265 and E268 each coordinate Zn(2+). Residues 265–268, R323, and 340–341 each bind substrate; these read HARE and DR. A disulfide bond links C334 and C357. 2 N-linked (GlcNAc...) asparagine glycosylation sites follow: N381 and N387. A Zn(2+)-binding site is contributed by H397. 398 to 399 is a binding site for substrate; sequence SY. The segment covering 561–571 has biased composition (acidic residues); sequence SNQLEDDDNEN. The disordered stretch occupies residues 561 to 582; it reads SNQLEDDDNENDTLLGFRTQKV. N571 carries N-linked (GlcNAc...) asparagine glycosylation.

This sequence belongs to the peptidase M14 family. Zn(2+) serves as cofactor.

It localises to the vacuole. The protein localises to the secreted. Its function is as follows. Inactive carboxypeptidase that may play a role in cell wall organization and biogenesis. In Coccidioides posadasii (strain C735) (Valley fever fungus), this protein is Inactive metallocarboxypeptidase ECM14 (ECM14).